We begin with the raw amino-acid sequence, 84 residues long: Small ribosomal subunit protein bS16 (84 aa).

This sequence belongs to the bacterial ribosomal protein bS16 family.

This is Small ribosomal subunit protein bS16 from Burkholderia ambifaria (strain MC40-6).